We begin with the raw amino-acid sequence, 422 residues long: Multifunctional CCA protein (422 aa).

G8 and R11 together coordinate ATP. The CTP site is built by G8 and R11. D21 and D23 together coordinate Mg(2+). R91, R137, and R140 together coordinate ATP. R91, R137, and R140 together coordinate CTP. Positions 228 to 329 (TGLHSLMALE…VKLLQSCDAW (102 aa)) constitute an HD domain. Residues 403–422 (FKQDNAPEAQEKGGEDVGLT) form a disordered region.

The protein belongs to the tRNA nucleotidyltransferase/poly(A) polymerase family. Bacterial CCA-adding enzyme type 1 subfamily. In terms of assembly, monomer. Can also form homodimers and oligomers. Mg(2+) serves as cofactor. Ni(2+) is required as a cofactor.

The catalysed reaction is a tRNA precursor + 2 CTP + ATP = a tRNA with a 3' CCA end + 3 diphosphate. It carries out the reaction a tRNA with a 3' CCA end + 2 CTP + ATP = a tRNA with a 3' CCACCA end + 3 diphosphate. Functionally, catalyzes the addition and repair of the essential 3'-terminal CCA sequence in tRNAs without using a nucleic acid template. Adds these three nucleotides in the order of C, C, and A to the tRNA nucleotide-73, using CTP and ATP as substrates and producing inorganic pyrophosphate. tRNA 3'-terminal CCA addition is required both for tRNA processing and repair. Also involved in tRNA surveillance by mediating tandem CCA addition to generate a CCACCA at the 3' terminus of unstable tRNAs. While stable tRNAs receive only 3'-terminal CCA, unstable tRNAs are marked with CCACCA and rapidly degraded. In Hahella chejuensis (strain KCTC 2396), this protein is Multifunctional CCA protein.